The primary structure comprises 459 residues: tRNA modification GTPase MnmE (459 aa).

Residues Arg-22, Glu-85, and Arg-124 each contribute to the (6S)-5-formyl-5,6,7,8-tetrahydrofolate site. In terms of domain architecture, TrmE-type G spans 221–380; it reads GLSTVIVGKP…LEIQIRDLFF (160 aa). Asn-231 lines the K(+) pocket. GTP contacts are provided by residues 231-236, 250-256, and 275-278; these read NVGKSS, TEVAGTT, and DTAG. Ser-235 contributes to the Mg(2+) binding site. Thr-250, Val-252, and Thr-255 together coordinate K(+). Residue Thr-256 participates in Mg(2+) binding. Lys-459 serves as a coordination point for (6S)-5-formyl-5,6,7,8-tetrahydrofolate.

The protein belongs to the TRAFAC class TrmE-Era-EngA-EngB-Septin-like GTPase superfamily. TrmE GTPase family. As to quaternary structure, homodimer. Heterotetramer of two MnmE and two MnmG subunits. It depends on K(+) as a cofactor.

The protein localises to the cytoplasm. Exhibits a very high intrinsic GTPase hydrolysis rate. Involved in the addition of a carboxymethylaminomethyl (cmnm) group at the wobble position (U34) of certain tRNAs, forming tRNA-cmnm(5)s(2)U34. The protein is tRNA modification GTPase MnmE of Staphylococcus aureus (strain bovine RF122 / ET3-1).